We begin with the raw amino-acid sequence, 229 residues long: Putative N-acetylmannosamine-6-phosphate 2-epimerase (229 aa).

It belongs to the NanE family.

It catalyses the reaction an N-acyl-D-glucosamine 6-phosphate = an N-acyl-D-mannosamine 6-phosphate. The protein operates within amino-sugar metabolism; N-acetylneuraminate degradation; D-fructose 6-phosphate from N-acetylneuraminate: step 3/5. Functionally, converts N-acetylmannosamine-6-phosphate (ManNAc-6-P) to N-acetylglucosamine-6-phosphate (GlcNAc-6-P). This Pediococcus pentosaceus (strain ATCC 25745 / CCUG 21536 / LMG 10740 / 183-1w) protein is Putative N-acetylmannosamine-6-phosphate 2-epimerase.